We begin with the raw amino-acid sequence, 447 residues long: MIGFADRLAEITKKIKGASIIDEDFVKEVVRDVQRALLEADVDVKLVLELSKRIEKRALEEEPPAGVPKRDYLLRIVYEELVELLGGEKTEGLDIDLSRDVNVIMLVGLYGMGKTTTAAKLARYLQRKGYRVGLVGADPYRPAAGEQLRQLAEEVDVPVHVEDVDDAVEMAVKGVEALKDECDVVIVDTAGRDRLSEDLIDELREMAERIEPHEVLLVLDATVGQKAGDHAEAFHEAVQLTGVVITKLDTAAKGGGALSAVARTGAPIKFVGTGERVDDLEEFNPRSFVARLLGIGDIDELLRRTEEMLEEEEKAEDVLEGEFTLKDLYEQLEALSKMGPVDKLLQYVPGMGGGRNVRKISQITEERLKKYKVIMDSMTEKELENPEILNKSRIRRIAIGSGTSERDVIELLNHYRMMKDVIEDIQSGRIPRIGGELGRVIRNVLRG.

Residues 108–115 (GLYGMGKT), 188–192 (DTAGR), and 246–249 (TKLD) contribute to the GTP site.

This sequence belongs to the GTP-binding SRP family. SRP54 subfamily. In terms of assembly, part of the signal recognition particle protein translocation system, which is composed of SRP and FtsY. Archaeal SRP consists of a 7S RNA molecule of 300 nucleotides and two protein subunits: SRP54 and SRP19.

It localises to the cytoplasm. It catalyses the reaction GTP + H2O = GDP + phosphate + H(+). Functionally, involved in targeting and insertion of nascent membrane proteins into the cytoplasmic membrane. Binds to the hydrophobic signal sequence of the ribosome-nascent chain (RNC) as it emerges from the ribosomes. The SRP-RNC complex is then targeted to the cytoplasmic membrane where it interacts with the SRP receptor FtsY. This is Signal recognition particle 54 kDa protein from Methanopyrus kandleri (strain AV19 / DSM 6324 / JCM 9639 / NBRC 100938).